Here is a 278-residue protein sequence, read N- to C-terminus: Formyltetrahydrofolate deformylase (278 aa).

Residues 6-85 (ILLTDCPDDK…RLIGTQRKRI (80 aa)) form the ACT domain. Asp-223 is a catalytic residue.

It belongs to the PurU family.

It carries out the reaction (6R)-10-formyltetrahydrofolate + H2O = (6S)-5,6,7,8-tetrahydrofolate + formate + H(+). It functions in the pathway purine metabolism; IMP biosynthesis via de novo pathway; formate from 10-formyl-5,6,7,8-tetrahydrofolate: step 1/1. Catalyzes the hydrolysis of 10-formyltetrahydrofolate (formyl-FH4) to formate and tetrahydrofolate (FH4). This chain is Formyltetrahydrofolate deformylase, found in Haemophilus influenzae (strain ATCC 51907 / DSM 11121 / KW20 / Rd).